The primary structure comprises 292 residues: Glutathione S-transferase L2, chloroplastic (292 aa).

The transit peptide at Met-1–Leu-56 directs the protein to the chloroplast. The region spanning Gly-79–Ser-160 is the GST N-terminal domain. Residues Cys-89–Pro-90, Asn-117–Arg-118, Lys-131–Val-132, and Glu-144–Ser-145 each bind glutathione. The GST C-terminal domain maps to Asn-130–Val-286.

It belongs to the GST superfamily. Lambda family.

It localises to the plastid. The protein localises to the chloroplast. It carries out the reaction RX + glutathione = an S-substituted glutathione + a halide anion + H(+). Functionally, catalyzes the glutathione-dependent reduction of S-glutathionylquercetin to quercetin. In vitro, possesses glutathione-dependent thiol transferase activity toward 2-hydroxyethyl disulfide (HED). This Arabidopsis thaliana (Mouse-ear cress) protein is Glutathione S-transferase L2, chloroplastic (GSTL2).